A 511-amino-acid polypeptide reads, in one-letter code: Small ribosomal subunit protein uS4m (511 aa).

Positions 202–272 constitute an S4 RNA-binding domain; it reads KRLDVVLYRS…IKNNLFSNIN (71 aa).

It belongs to the universal ribosomal protein uS4 family.

It localises to the mitochondrion. The protein is Small ribosomal subunit protein uS4m (RPS4) of Prototheca wickerhamii.